Here is a 229-residue protein sequence, read N- to C-terminus: Choline-phosphate cytidylyltransferase (229 aa).

CDP-choline-binding residues include Leu-6, Ala-8, Gly-9, Tyr-80, Asn-82, Ser-85, and Ala-101. Residue Asp-102 participates in Mg(2+) binding. Tyr-185 serves as a coordination point for CDP-choline. Mg(2+)-binding residues include Glu-211 and Asp-213.

Belongs to the LicC/PntC cytidylyltransferase family. As to quaternary structure, monomer. Forms dimers in LicC-CDP-Cho-Mg(2+) crystals, but the monomer is probably the biologically functional unit. It depends on Mg(2+) as a cofactor.

It catalyses the reaction phosphocholine + CTP + H(+) = CDP-choline + diphosphate. It participates in cell wall biogenesis; teichoic acid biosynthesis. It functions in the pathway cell wall biogenesis; lipoteichoic acid biosynthesis. Its activity is regulated as follows. Mg(2+) in slight excess of CTP gives maximal activity. Strongly inhibited by Ca(2+) and several other metal ions, such as Cd(2+), Co(2+), Cu(2+), Mn(2+), Ni(2+), Zn(2+) and Fe(2+). Also inhibited by Mg(2+) at high concentrations. CDP-Cho is a competitive inhibitor with respect to CTP, whereas diphosphate is a mixed-type inhibitor with respect to CTP. Cytidylyltransferase involved in the biosynthesis of the phosphocholine containing cell wall constituents, teichoic acid and lipoteichoic acid, which are essential for cell separation and pathogenesis. Catalyzes the activation of phosphocholine (P-Cho) to CDP-choline (CDP-Cho). Can also use phosphoethanolamine and 2-aminoethylphosphonate, with much lower efficiency. Shows lower activity with dCTP, weak activity with ATP and no activity with GTP, TTP, UTP, dATP, dGTP and dTTP. The protein is Choline-phosphate cytidylyltransferase of Streptococcus pneumoniae (strain ATCC BAA-255 / R6).